A 159-amino-acid polypeptide reads, in one-letter code: 6,7-dimethyl-8-ribityllumazine synthase (159 aa).

Residues Trp-28, 59 to 61 (ALE), and 81 to 83 (CVI) each bind 5-amino-6-(D-ribitylamino)uracil. Residue 86–87 (GT) participates in (2S)-2-hydroxy-3-oxobutyl phosphate binding. Catalysis depends on His-89, which acts as the Proton donor. 5-amino-6-(D-ribitylamino)uracil is bound at residue Asn-114. Arg-128 is a binding site for (2S)-2-hydroxy-3-oxobutyl phosphate.

This sequence belongs to the DMRL synthase family.

It carries out the reaction (2S)-2-hydroxy-3-oxobutyl phosphate + 5-amino-6-(D-ribitylamino)uracil = 6,7-dimethyl-8-(1-D-ribityl)lumazine + phosphate + 2 H2O + H(+). Its pathway is cofactor biosynthesis; riboflavin biosynthesis; riboflavin from 2-hydroxy-3-oxobutyl phosphate and 5-amino-6-(D-ribitylamino)uracil: step 1/2. Functionally, catalyzes the formation of 6,7-dimethyl-8-ribityllumazine by condensation of 5-amino-6-(D-ribitylamino)uracil with 3,4-dihydroxy-2-butanone 4-phosphate. This is the penultimate step in the biosynthesis of riboflavin. This is 6,7-dimethyl-8-ribityllumazine synthase from Corynebacterium kroppenstedtii (strain DSM 44385 / JCM 11950 / CIP 105744 / CCUG 35717).